Consider the following 264-residue polypeptide: MGYLKKLALFISVIILGIFIIGCDSSSDTAEKAKEDSKEEQIKKSFAKTLDMYPIKNLEDLYDKEGYRDGEFKKGDKGTWTLLTSFSKSNKPGEIDDEGMVLYLNRNTKKATGYYFVNKIYDDISKNQNEKKYRVELKNNKIILLDNVEDEKLKQKIENFKFFSQYADFKDLKNYQDGSITTNENVPRYEAEYKLNNSDTNVKKLRDIYPITTKKAPILKLHIDGDIKGSSVGYKKIEYKFSKVKDQETTLRDYLNFGPSDEDS.

Residues 1-22 (MGYLKKLALFISVIILGIFIIG) form the signal peptide. A lipid anchor (N-palmitoyl cysteine) is attached at cysteine 23. Cysteine 23 carries S-diacylglycerol cysteine lipidation.

Belongs to the staphylococcal tandem lipoprotein family.

The protein resides in the cell membrane. This is an uncharacterized protein from Staphylococcus aureus (strain N315).